The chain runs to 392 residues: Elongation factor Tu 2 (392 aa).

One can recognise a tr-type G domain in the interval 10 to 201 (KPHVNIGTIG…AVDSYIPTPE (192 aa)). A G1 region spans residues 19–26 (GHVDHGKT). A GTP-binding site is contributed by 19 to 26 (GHVDHGKT). Mg(2+) is bound at residue threonine 26. Residues 55–59 (GITIS) form a G2 region. The G3 stretch occupies residues 76–79 (DCPG). GTP is bound by residues 76–80 (DCPGH) and 131–134 (NKVD). Positions 131–134 (NKVD) are G4. Residues 169-171 (SAL) form a G5 region.

Belongs to the TRAFAC class translation factor GTPase superfamily. Classic translation factor GTPase family. EF-Tu/EF-1A subfamily. Monomer.

Its subcellular location is the cytoplasm. It catalyses the reaction GTP + H2O = GDP + phosphate + H(+). GTP hydrolase that promotes the GTP-dependent binding of aminoacyl-tRNA to the A-site of ribosomes during protein biosynthesis. In Rhizobium etli (strain ATCC 51251 / DSM 11541 / JCM 21823 / NBRC 15573 / CFN 42), this protein is Elongation factor Tu 2.